Reading from the N-terminus, the 346-residue chain is Membrane progestin receptor alpha (346 aa).

At 1–72 the chain is on the cytoplasmic side; that stretch reads MAMAQKLSHL…RTLFQQHNEA (72 aa). A helical membrane pass occupies residues 73–93; it reads VNVWTHLLAALVLLLRLALFV. The Extracellular portion of the chain corresponds to 94–103; that stretch reads ETVDFWGDPH. Residues 104 to 124 traverse the membrane as a helical segment; that stretch reads ALPLFIIVLASFTYLSFSALA. The Cytoplasmic segment spans residues 125-137; that stretch reads HLLQAKSEFWHYS. Residues 138–158 form a helical membrane-spanning segment; sequence FFFLDYVGVAVYQFGSALAHF. The Extracellular portion of the chain corresponds to 159 to 169; that stretch reads YYAIEPAWHAQ. Residues 170-190 traverse the membrane as a helical segment; sequence VQAVFLPMAAFLAWLSCIGSC. Residues 191-237 are Cytoplasmic-facing; it reads YNKYIQKPGLLGRTCQEVPSVLAYALDISPVVHRIFVSSDPTTDDPA. The helical transmembrane segment at 238-258 threads the bilayer; it reads LLYHKCQVVFFLLAAAFFSTF. Residues 259-276 lie on the Extracellular side of the membrane; the sequence is MPERWFPGSCHVFGQGHQ. The chain crosses the membrane as a helical span at residues 277–297; it reads LFHIFLVLCTLAQLEAVALDY. Residues 298–316 lie on the Cytoplasmic side of the membrane; that stretch reads EARRPIYEPLHTHWPHNFS. Residues 317 to 337 form a helical membrane-spanning segment; sequence GLFLLTVGSSILTAFLLSQLV. Topologically, residues 338–346 are extracellular; it reads QRKLDQKTK.

Belongs to the ADIPOR family. Expressed in a wide range of tissues including ovary, testis, placenta, uterus and bladder.

It localises to the cell membrane. In terms of biological role, plasma membrane progesterone (P4) receptor coupled to G proteins. Seems to act through a G(i) mediated pathway. May be involved in oocyte maturation. Involved in neurosteroid inhibition of apoptosis. Also binds dehydroepiandrosterone (DHEA), pregnanolone, pregnenolone and allopregnanolone. The sequence is that of Membrane progestin receptor alpha from Homo sapiens (Human).